The sequence spans 234 residues: Sperm flagellar protein 1 (234 aa).

In terms of domain architecture, Calponin-homology (CH) spans 7–112; it reads EEALHQLYLW…VLIPLRQRLE (106 aa). Residues 181 to 234 are essential for homodimerization and microtubule bundling activity; that stretch reads VLQIAEKEQELLASQETVQVLQMKVKRLEHLLQLKNVRIDDLSRRLQQAERKQR.

Homodimer. Interacts with actin, TJP1, CGN and CDH1. In terms of tissue distribution, expressed predominantly in the seminiferous epithelium of adult testis. Expressed in pillar cells of the organ of Corti (at protein level). Expressed in brain, kidney, lung and testis. Highly expressed in the trachea, lung and oviduct.

It is found in the cytoplasm. The protein resides in the cell projection. The protein localises to the cilium. Its subcellular location is the flagellum. It localises to the cytoskeleton. It is found in the cilium axoneme. The protein resides in the apical cell membrane. The protein localises to the basolateral cell membrane. Its subcellular location is the stress fiber. It localises to the microvillus. It is found in the lamellipodium. The protein resides in the filopodium. Functionally, microtubule-associated protein that promotes microtubule bundling and stabilizes microtubules against depolymerization in response to cold shock. Microtubule-associated protein involved in the stabilization of microtubules along the axis of migration during radial intercalation. Promotes the establishment and stabilization of an axis of microtubules required for the active migration of cells into the outer epithelium. Essential for ciliary central apparatus formation which requires both its microtubule-binding and bundling activities and for ciliary localization of HYDIN and SPAG6 in ependymal cilia. Binds actin in intestinal epithelial cells (IECs), essential for IECs survival and contributes to formation of filopodia and lamellipodia in migrating IECs. Regulates planar cell polarity signaling pathway and asymmetric microtubule accumulation in ciliated epithelia. This is Sperm flagellar protein 1 (Spef1) from Mus musculus (Mouse).